Here is a 197-residue protein sequence, read N- to C-terminus: dITP/XTP pyrophosphatase (197 aa).

10-15 (SHNGGK) contacts substrate. Positions 41 and 70 each coordinate Mg(2+). Aspartate 70 (proton acceptor) is an active-site residue. Substrate-binding positions include serine 71, 154–157 (FGYD), lysine 177, and 182–183 (HR).

The protein belongs to the HAM1 NTPase family. As to quaternary structure, homodimer. Mg(2+) serves as cofactor.

It carries out the reaction XTP + H2O = XMP + diphosphate + H(+). The enzyme catalyses dITP + H2O = dIMP + diphosphate + H(+). The catalysed reaction is ITP + H2O = IMP + diphosphate + H(+). Pyrophosphatase that catalyzes the hydrolysis of nucleoside triphosphates to their monophosphate derivatives, with a high preference for the non-canonical purine nucleotides XTP (xanthosine triphosphate), dITP (deoxyinosine triphosphate) and ITP. Seems to function as a house-cleaning enzyme that removes non-canonical purine nucleotides from the nucleotide pool, thus preventing their incorporation into DNA/RNA and avoiding chromosomal lesions. This chain is dITP/XTP pyrophosphatase, found in Pseudomonas syringae pv. tomato (strain ATCC BAA-871 / DC3000).